A 39-amino-acid polypeptide reads, in one-letter code: Photosystem II reaction center protein L (39 aa).

The chain crosses the membrane as a helical span at residues 18 to 38; it reads SLYLGLLLVFVTAVLFTSYFF.

This sequence belongs to the PsbL family. As to quaternary structure, PSII is composed of 1 copy each of membrane proteins PsbA, PsbB, PsbC, PsbD, PsbE, PsbF, PsbH, PsbI, PsbJ, PsbK, PsbL, PsbM, PsbT, PsbX, PsbY, Psb30/Ycf12, peripheral proteins PsbO, CyanoQ (PsbQ), PsbU, PsbV and a large number of cofactors. It forms dimeric complexes.

Its subcellular location is the cellular thylakoid membrane. One of the components of the core complex of photosystem II (PSII). PSII is a light-driven water:plastoquinone oxidoreductase that uses light energy to abstract electrons from H(2)O, generating O(2) and a proton gradient subsequently used for ATP formation. It consists of a core antenna complex that captures photons, and an electron transfer chain that converts photonic excitation into a charge separation. This subunit is found at the monomer-monomer interface and is required for correct PSII assembly and/or dimerization. The sequence is that of Photosystem II reaction center protein L from Prochlorococcus marinus (strain MIT 9313).